The chain runs to 153 residues: ORM1-like protein 2 (153 aa).

Topologically, residues Met1–Gly21 are cytoplasmic. Helical transmembrane passes span Ile22–Phe42 and Phe43–Phe63. Residues Leu64 to Ser105 are Cytoplasmic-facing. A helical membrane pass occupies residues Pro106–Ile126. Over Asn127–Tyr153 the chain is Extracellular.

This sequence belongs to the ORM family. Ceramide-sensitive subunit of the serine palmitoyltransferase (SPT) complex, which is also composed of SPTLC1, SPTLC2/3 and SPTSSA/B.

It is found in the endoplasmic reticulum membrane. Its function is as follows. Plays an essential role in the homeostatic regulation of sphingolipid de novo biosynthesis by modulating the activity of the serine palmitoyltransferase (SPT) in response to ceramide levels. When complexed to SPT, the binding of ceramides to its N-terminus stabilizes a conformation that block SPT substrate entry, hence preventing SPT catalytic activity. Through this mechanism, maintains ceramide levels at sufficient concentrations for the production of complex sphingolipids, but which prevents the accumulation of ceramides to levels that trigger apoptosis. In Mus musculus (Mouse), this protein is ORM1-like protein 2 (Ormdl2).